The chain runs to 191 residues: MSIENLHIADETEIPAGATVELHSRPERKARKALEGLGLKRVQGIQRVTLRRARNVLLVVSSPEVYKSPGSDCYIVFGEAKVEDPNSAAQLQAQAQLAASSQAAQQAHAHGGFKEGVPKSLEELMQDAPSADSSAPAPSGEATDASASGDFKVSDEEIQLIVAQTGVDEAKAREAYISEKGDLINAIMKLQ.

Positions 24 to 89 (SRPERKARKA…AKVEDPNSAA (66 aa)) constitute an NAC-A/B domain. A disordered region spans residues 126–149 (QDAPSADSSAPAPSGEATDASASG). Residues 127–139 (DAPSADSSAPAPS) are compositionally biased toward low complexity. The UBA domain maps to 153 to 191 (VSDEEIQLIVAQTGVDEAKAREAYISEKGDLINAIMKLQ).

Belongs to the NAC-alpha family. As to quaternary structure, part of the nascent polypeptide-associated complex (NAC), consisting of EGD2 and EGD1. NAC associates with ribosomes via EGD1.

It localises to the cytoplasm. Its subcellular location is the nucleus. Component of the nascent polypeptide-associated complex (NAC), a dynamic component of the ribosomal exit tunnel, protecting the emerging polypeptides from interaction with other cytoplasmic proteins to ensure appropriate nascent protein targeting. The NAC complex also promotes mitochondrial protein import by enhancing productive ribosome interactions with the outer mitochondrial membrane and blocks the inappropriate interaction of ribosomes translating non-secretory nascent polypeptides with translocation sites in the membrane of the endoplasmic reticulum. EGD2 may also be involved in transcription regulation. This chain is Nascent polypeptide-associated complex subunit alpha (EGD2), found in Cryptococcus neoformans var. neoformans serotype D (strain B-3501A) (Filobasidiella neoformans).